The primary structure comprises 515 residues: Endoglucanase 23 (515 aa).

The N-terminal stretch at 1–29 is a signal peptide; that stretch reads MALLSAPVRRRRSRVRVLLVCCCLLLALA. Asp95 functions as the Nucleophile in the catalytic mechanism. N-linked (GlcNAc...) asparagine glycans are attached at residues Asn178, Asn375, and Asn384. His426 is a catalytic residue. N-linked (GlcNAc...) asparagine glycosylation is present at Asn452. Residues Asp477 and Glu486 contribute to the active site.

It belongs to the glycosyl hydrolase 9 (cellulase E) family.

It localises to the secreted. The catalysed reaction is Endohydrolysis of (1-&gt;4)-beta-D-glucosidic linkages in cellulose, lichenin and cereal beta-D-glucans.. This chain is Endoglucanase 23 (GLU12), found in Oryza sativa subsp. japonica (Rice).